The chain runs to 318 residues: Aldo-keto reductase family 1 member C21 (318 aa).

20–24 contributes to the NADP(+) binding site; it reads GFGTA. Lys31 provides a ligand contact to substrate. An NADP(+)-binding site is contributed by Asp50. Residue Tyr55 is the Proton donor of the active site. His117 serves as a coordination point for substrate. Residues 166–167, Gln190, 216–224, and 270–280 each bind NADP(+); these read SN, YGVLGTQRY, and TSLKEERIKEN.

This sequence belongs to the aldo/keto reductase family. In terms of assembly, monomer.

The protein resides in the cytoplasm. The catalysed reaction is androsterone + NADP(+) = 5alpha-androstan-3,17-dione + NADPH + H(+). It carries out the reaction androsterone + NAD(+) = 5alpha-androstan-3,17-dione + NADH + H(+). Functionally, NADP-dependent 17-alpha-hydroxysteroid dehydrogenase that converts 5-alpha-androstane-3,17-dione into androsterone. Has lower 3-alpha-hydroxysteroid dehydrogenase activity. Has broad substrate specificity and acts on various 17-alpha-hydroxysteroids, 17-ketosteroids, 3-alpha hydroxysteroids and 3-ketosteroids. Reduction of keto groups is strictly stereoselective. Reduction of 17-ketosteroids yields only 17-alpha-hydroxysteroids. Likewise, reduction of 3-ketosteroids yields only 3-alpha-hydroxysteroids. This is Aldo-keto reductase family 1 member C21 (Akr1c21) from Rattus norvegicus (Rat).